A 594-amino-acid chain; its full sequence is Laccase-2 (594 aa).

Residues Met-1–Ser-20 form the signal peptide. The N-linked (GlcNAc...) asparagine glycan is linked to Asn-67. Plastocyanin-like domains lie at Glu-70–Asn-183 and Asp-195–Gly-357. His-117 and His-119 together coordinate Cu cation. A glycan (N-linked (GlcNAc...) asparagine) is linked at Asn-124. Cys-138 and Cys-578 are disulfide-bonded. Cu cation is bound by residues His-162 and His-164. N-linked (GlcNAc...) asparagine glycosylation is found at Asn-242, Asn-286, Asn-320, Asn-358, Asn-397, Asn-430, Asn-452, and Asn-458. Residues Pro-466–Glu-563 enclose the Plastocyanin-like 3 domain. Positions 480, 483, and 485 each coordinate Cu cation. An N-linked (GlcNAc...) asparagine glycan is attached at Asn-508. Cu cation is bound by residues His-543, Cys-544, His-545, and His-549.

It belongs to the multicopper oxidase family. Cu cation serves as cofactor.

It is found in the secreted. The protein resides in the cell wall. It catalyses the reaction 4 hydroquinone + O2 = 4 benzosemiquinone + 2 H2O. In terms of biological role, laccase that catalyzes the oxidation of certain aromatic compounds, including L-dopa, to quinones, which then polymerize to melanin. Able to oxidize a wide variety of aromatic diphenol and diamino groups in the ortho, meta, and para positions but not monophenolic groups such as in phenol, tyramine, or tyrosine. Plays an important role in virulence. Plays a role in dissemination to extrapulmonary sites but is not involved in pulmonary growth or in elicitation of cellular immune responses in the lung. This chain is Laccase-2 (LAC2), found in Cryptococcus neoformans var. grubii serotype A (strain H99 / ATCC 208821 / CBS 10515 / FGSC 9487) (Filobasidiella neoformans var. grubii).